Consider the following 281-residue polypeptide: Voltage-dependent L-type calcium channel subunit alpha-1S (281 aa).

An III repeat occupies 1–8 (VGFVIVTF). The segment at 1–17 (VGFVIVTFQEQGESEYK) is dihydropyridine binding. One copy of the IV repeat lies at 45–281 (NPYQYQIWYV…TCGTGFAYFY (237 aa)). Residues 59 to 80 (YFEYLMFFLIMLNTICLGMQHY) traverse the membrane as a helical segment. N81 is a glycosylation site (N-linked (GlcNAc...) asparagine). The chain crosses the membrane as a helical span at residues 89–110 (VSDILNVAFTVLFTLEMILKLM). The helical transmembrane segment at 121–140 (PWNVFDFLIVIGSIIDVILS) threads the bilayer. Residues 153 to 171 (ITFFRLFRVMRLVKLLSRG) traverse the membrane as a helical segment. A helical membrane pass occupies residues 190-210 (YVALLIVMLFFIYAVIGMQMF). Residues 233–251 (AVLLLFRCATGEAWQEILL) constitute an intramembrane region (pore-forming). The Selectivity filter of repeat IV signature appears at 242–245 (TGEA). The interval 258-281 (RCDPESDYAEGEEYTCGTGFAYFY) is dihydropyridine binding. C259 and C273 are disulfide-bonded. The tract at residues 270-281 (EYTCGTGFAYFY) is phenylalkylamine binding.

This sequence belongs to the calcium channel alpha-1 subunit (TC 1.A.1.11) family. CACNA1S subfamily. In terms of assembly, component of a calcium channel complex consisting of a pore-forming alpha subunit (CACNA1S) and the ancillary subunits CACNB1 or CACNB2, CACNG1 and CACNA2D1. The channel complex contains alpha, beta, gamma and delta subunits in a 1:1:1:1 ratio, i.e. it contains either CACNB1 or CACNB2. CACNA1S channel activity is modulated by the auxiliary subunits (CACNB1 or CACNB2, CACNG1 and CACNA2D1). Interacts with DYSF and JSRP1. Interacts with RYR1. Interacts with CALM. In terms of processing, the alpha-1S subunit is found in two isoforms in the skeletal muscle: a minor form of 212 kDa containing the complete amino acid sequence, and a major form of 190 kDa derived from the full-length form by post-translational proteolysis close to Phe-1690. Post-translationally, both the minor and major forms are phosphorylated in vitro by PKA. Phosphorylation by PKA activates the calcium channel.

It localises to the cell membrane. Its subcellular location is the sarcolemma. The protein resides in the T-tubule. The catalysed reaction is Ca(2+)(in) = Ca(2+)(out). Channel activity is blocked by dihydropyridines (DHP), phenylalkylamines, and by benzothiazepines. Functionally, pore-forming, alpha-1S subunit of the voltage-gated calcium channel that gives rise to L-type calcium currents in skeletal muscle. Calcium channels containing the alpha-1S subunit play an important role in excitation-contraction coupling in skeletal muscle via their interaction with RYR1, which triggers Ca(2+) release from the sarcplasmic reticulum and ultimately results in muscle contraction. Long-lasting (L-type) calcium channels belong to the 'high-voltage activated' (HVA) group. The chain is Voltage-dependent L-type calcium channel subunit alpha-1S (CACNA1S) from Gallus gallus (Chicken).